Consider the following 224-residue polypeptide: Ras-related protein RABA4b (224 aa).

Ala-2 carries the post-translational modification N-acetylalanine. 24 to 31 (GDSAVGKS) is a GTP binding site. The short motif at 46–54 (SKATIGVEF) is the Effector region element. Residues 72–76 (DTAGQ), 130–133 (NKSD), and 160–161 (SA) each bind GTP. Residues Cys-220 and Cys-221 are each lipidated (S-geranylgeranyl cysteine).

Belongs to the small GTPase superfamily. Rab family. Interacts with TCTP1. Expressed in roots, stems, leaves and flowers. Expressed in tips of growing root hair cells.

It is found in the early endosome membrane. It localises to the golgi apparatus. The protein resides in the trans-Golgi network membrane. Its function is as follows. Regulator of membrane trafficking. May be required for secretion of cell wall components in cells. The chain is Ras-related protein RABA4b from Arabidopsis thaliana (Mouse-ear cress).